The primary structure comprises 166 residues: MSVNEQKAPELQEKLVQVNRVAKVVKGGRIFAFTALTVVGDGKGRVGFGRGKAREVPVAIQKAMEAARKNMVDVALDGTTLQYPVRAQHGGSKVFMQPASEGTGIIAGGAMRAVLEVAGVQNVLSKCYGSTNPVNVVRSTIKGLQAMKAPEDVAAKRGKSVEDILG.

The 64-residue stretch at 11 to 74 (LQEKLVQVNR…EAARKNMVDV (64 aa)) folds into the S5 DRBM domain.

It belongs to the universal ribosomal protein uS5 family. Part of the 30S ribosomal subunit. Contacts proteins S4 and S8.

With S4 and S12 plays an important role in translational accuracy. In terms of biological role, located at the back of the 30S subunit body where it stabilizes the conformation of the head with respect to the body. The sequence is that of Small ribosomal subunit protein uS5 from Marinobacter nauticus (strain ATCC 700491 / DSM 11845 / VT8) (Marinobacter aquaeolei).